The chain runs to 335 residues: GTPase Obg (335 aa).

In terms of domain architecture, Obg spans 1–158 (MFVDQITLEL…RQVELELKLI (158 aa)). The tract at residues 126 to 145 (NTFFKTSVNRAPTKATPGKP) is disordered. In terms of domain architecture, OBG-type G spans 159–334 (ADIGLVGFPN…LYRFFTQRLA (176 aa)). GTP contacts are provided by residues 165–172 (GFPNAGKS), 190–194 (FTTLA), 215–218 (DIPG), 285–288 (NKID), and 315–317 (SGL). 2 residues coordinate Mg(2+): serine 172 and threonine 192.

Belongs to the TRAFAC class OBG-HflX-like GTPase superfamily. OBG GTPase family. As to quaternary structure, monomer. The cofactor is Mg(2+).

The protein resides in the cytoplasm. In terms of biological role, an essential GTPase which binds GTP, GDP and possibly (p)ppGpp with moderate affinity, with high nucleotide exchange rates and a fairly low GTP hydrolysis rate. Plays a role in control of the cell cycle, stress response, ribosome biogenesis and in those bacteria that undergo differentiation, in morphogenesis control. The chain is GTPase Obg from Chlamydia pneumoniae (Chlamydophila pneumoniae).